A 471-amino-acid polypeptide reads, in one-letter code: MTDLPDSTRWQLWIVAFGFFMQSLDTTIVNTALPSMAQSLGESPLHMHMVIVSYVLTVAVMLPASGWLADKVGVRNIFFTAIVLFTLGSLFCALSGTLNELLLARALQGVGGAMMVPVGRLTVMKIVPREQYMAAMTFVTLPGQVGPLLGPALGGLLVEYASWHWIFLINIPVGIIGAIATLMLMPNYTMQTRRFDLSGFLLLAVGMAVLTLALDGSKGTGLSPLAIAGLVAVGVVALVLYLLHARNNNRALFSLKLFRTRTFSLGLAGSFAGRIGSGMLPFMTPVFLQIGLGFSPFHAGLMMIPMVLGSMGMKRIVVQVVNRFGYRRVLVATTLGLSLVTLLFMTTALLGWYYVLPFVLFLQGMVNSTRFSSMNTLTLKDLPDNLASSGNSLLSMIMQLSMSIGVTIAGLLLGLFGSQHVSIDSGTTQTVFMYTWLSMALIIALPAFIFARVPNDTHQNVAISRRKRSAQ.

The Periplasmic portion of the chain corresponds to M1–Q11. The helical transmembrane segment at L12–A32 threads the bilayer. Topologically, residues L33–H48 are cytoplasmic. A helical membrane pass occupies residues M49 to A69. Topologically, residues D70–N76 are periplasmic. Residues I77–T97 traverse the membrane as a helical segment. Over L98–L101 the chain is Cytoplasmic. Residues L102 to M124 traverse the membrane as a helical segment. Topologically, residues K125–T137 are periplasmic. The helical transmembrane segment at F138–V158 threads the bilayer. Residues E159–H164 lie on the Cytoplasmic side of the membrane. A helical membrane pass occupies residues W165 to M185. Topologically, residues P186 to D196 are periplasmic. Residues L197–S217 form a helical membrane-spanning segment. The Cytoplasmic portion of the chain corresponds to K218–P224. Residues L225 to A245 traverse the membrane as a helical segment. The Periplasmic segment spans residues R246–T262. The helical transmembrane segment at F263–M283 threads the bilayer. At T284 to P285 the chain is on the cytoplasmic side. Residues V286–M306 form a helical membrane-spanning segment. The Periplasmic portion of the chain corresponds to V307–T341. The chain crosses the membrane as a helical span at residues L342–L362. The Cytoplasmic portion of the chain corresponds to Q363 to S395. A helical transmembrane segment spans residues M396–F416. Residues G417–T430 are Periplasmic-facing. A helical membrane pass occupies residues V431–A451. Over R452–Q471 the chain is Cytoplasmic.

The protein belongs to the major facilitator superfamily. TCR/Tet family.

Its subcellular location is the cell inner membrane. This Escherichia coli (strain 55989 / EAEC) protein is Putative multidrug resistance protein MdtD.